A 249-amino-acid polypeptide reads, in one-letter code: Serine 3-dehydrogenase (249 aa).

Residue 6-30 (LITGATSGFGQATARRFVKEGWKVI) coordinates NADP(+). Residue Ser135 participates in substrate binding. Tyr148 acts as the Proton acceptor in catalysis.

This sequence belongs to the short-chain dehydrogenases/reductases (SDR) family. Homotetramer.

It carries out the reaction L-serine + NADP(+) = aminoacetaldehyde + CO2 + NADPH. Catalyzes the oxidation of the hydroxyl group of serine to form 2-aminomalonate semialdehyde which is spontaneously converted into 2-aminoacetaldehyde and CO(2). Also acts on D-serine, L-glycerate, D-glycerate and 2-methyl-DL-serine. Does not act on O-methyl-DL-serine and L-threonine. This is Serine 3-dehydrogenase (sdh) from Agrobacterium fabrum (strain C58 / ATCC 33970) (Agrobacterium tumefaciens (strain C58)).